We begin with the raw amino-acid sequence, 164 residues long: Peptide deformylase-like (164 aa).

Residue Glu134 is part of the active site.

It belongs to the polypeptide deformylase family.

The sequence is that of Peptide deformylase-like from Brucella melitensis biotype 1 (strain ATCC 23456 / CCUG 17765 / NCTC 10094 / 16M).